The chain runs to 357 residues: Aurora kinase A- and ninein-interacting protein (357 aa).

Residues 71-91 (LQPGKTNGSDQKSVSSHTESQ) show a composition bias toward polar residues. The tract at residues 71 to 98 (LQPGKTNGSDQKSVSSHTESQINKESKK) is disordered. Residues 187–357 (RKEEKGDSAR…EGNQVIRHQF (171 aa)) form an interaction with AURKA region. A phosphoserine mark is found at Ser267 and Ser292. The segment at 281–357 (KDSWSQLFTE…EGNQVIRHQF (77 aa)) is interaction with RBBP8/CtIP.

It belongs to the AUNIP family. Interacts (via C-terminus) with AURKA (via C-terminus). Interacts (via N-terminus) with NIN; this interaction blocks NIN phosphorylation by both AURKA and GSK3B. Identified in a complex with NIN and AURKA. Interacts with RBBP8/CtIP. In terms of tissue distribution, expressed in heart, skeletal muscles, placenta and testis.

It localises to the nucleus. The protein localises to the chromosome. The protein resides in the cytoplasm. It is found in the cytoskeleton. Its subcellular location is the microtubule organizing center. It localises to the centrosome. The protein localises to the spindle pole. Its function is as follows. DNA-binding protein that accumulates at DNA double-strand breaks (DSBs) following DNA damage and promotes DNA resection and homologous recombination. Serves as a sensor of DNA damage: binds DNA with a strong preference for DNA substrates that mimic structures generated at stalled replication forks, and anchors RBBP8/CtIP to DSB sites to promote DNA end resection and ensuing homologous recombination repair. Inhibits non-homologous end joining (NHEJ). Required for the dynamic movement of AURKA at the centrosomes and spindle apparatus during the cell cycle. The sequence is that of Aurora kinase A- and ninein-interacting protein from Homo sapiens (Human).